We begin with the raw amino-acid sequence, 135 residues long: Ribonuclease P protein component (135 aa).

Belongs to the RnpA family. Consists of a catalytic RNA component (M1 or rnpB) and a protein subunit.

It catalyses the reaction Endonucleolytic cleavage of RNA, removing 5'-extranucleotides from tRNA precursor.. Its function is as follows. RNaseP catalyzes the removal of the 5'-leader sequence from pre-tRNA to produce the mature 5'-terminus. It can also cleave other RNA substrates such as 4.5S RNA. The protein component plays an auxiliary but essential role in vivo by binding to the 5'-leader sequence and broadening the substrate specificity of the ribozyme. This is Ribonuclease P protein component from Pseudomonas aeruginosa (strain ATCC 15692 / DSM 22644 / CIP 104116 / JCM 14847 / LMG 12228 / 1C / PRS 101 / PAO1).